A 189-amino-acid polypeptide reads, in one-letter code: MLDSIVYFFNKSGFVTTLVLVWISLYLVMTLWVFLYKSIALKIELKREMQSLSNILNGAQDAPEHFMFNKKRNDETKRYSNELLQAWKHQVLKQSTTGLVVLSIISSTAPFIGLFGTVVEILEAFNNLGTLGQASFGVIAPIISKALIATAAGILAAIPAYSFYLILKRKVYDLSVYVQMQVDILSSKK.

The next 3 membrane-spanning stretches (helical) occupy residues 14-34, 99-119, and 147-167; these read FVTT…LWVF, LVVL…GTVV, and LIAT…YLIL.

This sequence belongs to the ExbB/TolQ family.

The protein resides in the cell inner membrane. The polypeptide is Putative biopolymer transport protein ExbB-like 1 (Helicobacter pylori (strain ATCC 700392 / 26695) (Campylobacter pylori)).